Consider the following 457-residue polypeptide: Putative methyltransferase MT1451 (457 aa).

Residues 276-282, Glu301, Asp325, and Asp341 contribute to the S-adenosyl-L-methionine site; that span reads CAGPGGK. Cys394 acts as the Nucleophile in catalysis.

It belongs to the class I-like SAM-binding methyltransferase superfamily. RsmB/NOP family.

In terms of biological role, may act as RNA methyltransferase. In Mycobacterium tuberculosis (strain CDC 1551 / Oshkosh), this protein is Putative methyltransferase MT1451.